The sequence spans 331 residues: MGTPQKDVIIKSDAPDTLLLEKHADYIASYGSKKDDYEYCMSEYLRMSGIYWGLTVMDLMGQLHRMNREEILAFIKSCQHECGGISASIGHDPHLLYTLSAVQILTLYDSINVIDVNKVVEYVKGLQKEDGSFAGDIWGEIDTRFSFCAVATLALLGKLDAINVEKAIEFVLSCMNFDGGFGCRPGSESHAGQIYCCTGFLAITSQLHQVNSDLLGWWLCERQLPSGGLNGRPEKLPDVCYSWWVLASLKIIGRLHWIDREKLRNFILACQDEETGGFADRPGDMVDPFHTLFGIAGLSLLGEEQIKPVNPVFCMPEEVLQRVNVQPELVS.

The residue at position 2 (glycine 2) is an N-acetylglycine. At threonine 3 the chain carries Phosphothreonine. PFTB repeat units follow at residues 20–61 (LEKH…DLMG), 68–109 (REEI…TLYD), 116–157 (VNKV…ALLG), 164–205 (VEKA…AITS), 212–253 (SDLL…KIIG), and 260–302 (REKL…SLLG). 190–192 (HAG) is a binding site for geranylgeranyl diphosphate. Aspartate 238 and cysteine 240 together coordinate Zn(2+). Residue 241 to 244 (YSWW) participates in geranylgeranyl diphosphate binding. Residue histidine 290 participates in Zn(2+) binding.

The protein belongs to the protein prenyltransferase subunit beta family. As to quaternary structure, heterotrimer composed of RABGGTA, RABGGTB and CHM; within this trimer, RABGGTA and RABGGTB form the catalytic component B, while CHM (component A) mediates peptide substrate binding. The Rab GGTase dimer (RGGT) interacts with CHM (component A) prior to Rab protein binding; the association is stabilized by geranylgeranyl pyrophosphate (GGpp). The CHM:RGGT:Rab complex is destabilized by GGpp. Interaction of RABGGTB with prenylated PTP4A2 precludes its association with RABGGTA and inhibits enzyme activity. Interacts with CHODL. Interacts with non-phosphorylated form of RAB8A; phosphorylation of RAB8A at 'Thr-72' disrupts this interaction. Zn(2+) is required as a cofactor.

It carries out the reaction geranylgeranyl diphosphate + L-cysteinyl-[protein] = S-geranylgeranyl-L-cysteinyl-[protein] + diphosphate. The enzymatic reaction requires the aid of a Rab escort protein (also called component A). Catalyzes the transfer of a geranylgeranyl moiety from geranylgeranyl diphosphate to both cysteines of Rab proteins with the C-terminal sequence -XXCC, -XCXC and -CCXX, such as RAB1A, RAB3A, RAB5A and RAB7A. The polypeptide is Geranylgeranyl transferase type-2 subunit beta (RABGGTB) (Homo sapiens (Human)).